Consider the following 260-residue polypeptide: UPF0246 protein APP7_0648 (260 aa).

It belongs to the UPF0246 family.

This is UPF0246 protein APP7_0648 from Actinobacillus pleuropneumoniae serotype 7 (strain AP76).